The chain runs to 275 residues: Large ribosomal subunit protein uL2 (275 aa).

Positions 221 to 275 are disordered; it reads RGTAMNPIDHPHGGGEGKNFGKHPVSPWGVQSKGKKTRKNKRTEKYILYNRKYKK. The span at 253–262 shows a compositional bias: basic residues; the sequence is KGKKTRKNKR.

This sequence belongs to the universal ribosomal protein uL2 family. As to quaternary structure, part of the 50S ribosomal subunit. Forms a bridge to the 30S subunit in the 70S ribosome.

Its function is as follows. One of the primary rRNA binding proteins. Required for association of the 30S and 50S subunits to form the 70S ribosome, for tRNA binding and peptide bond formation. It has been suggested to have peptidyltransferase activity; this is somewhat controversial. Makes several contacts with the 16S rRNA in the 70S ribosome. This chain is Large ribosomal subunit protein uL2, found in Wigglesworthia glossinidia brevipalpis.